The sequence spans 147 residues: uncharacterized protein (147 aa).

In terms of domain architecture, N-acetyltransferase spans 1–147 (MEIRRADKDD…RPESGGSGSE (147 aa)).

The protein belongs to the acetyltransferase family.

This is an uncharacterized protein from Archaeoglobus fulgidus (strain ATCC 49558 / DSM 4304 / JCM 9628 / NBRC 100126 / VC-16).